The sequence spans 139 residues: Mitochondrial intermembrane space import and assembly protein 40 (139 aa).

Disulfide bonds link Cys53-Cys55, Cys64-Cys97, and Cys74-Cys87. Residues 61–105 enclose the CHCH domain; it reads SGPCGEQFKSAFSCFHYSQEEIKGSDCLDQFRAMQECMQKYPDIY. 2 short sequence motifs (cx9C motif) span residues 64–74 and 87–97; these read CGEQFKSAFSC and CLDQFRAMQEC. Residues 102-139 form a disordered region; sequence PDIYPQEDDEDEAEKEKQNKEAEAFSTETSDTKEESSS. The span at 115-124 shows a compositional bias: basic and acidic residues; sequence EKEKQNKEAE.

In terms of assembly, monomer. Can form homooligomers.

It localises to the mitochondrion intermembrane space. In terms of biological role, central component of a redox-sensitive mitochondrial intermembrane space import machinery which is required for the biogenesis of respiratory chain complexes. Functions as chaperone and catalyzes the formation of disulfide bonds in substrate proteins, such as COX17 or MICU1. Required for the import and folding of small cysteine-containing proteins (small Tim) in the mitochondrial intermembrane space (IMS). Precursor proteins to be imported into the IMS are translocated in their reduced form into the mitochondria. This chain is Mitochondrial intermembrane space import and assembly protein 40 (chchd4), found in Xenopus tropicalis (Western clawed frog).